Consider the following 776-residue polypeptide: Protein phosphatase 1 regulatory subunit 21 (776 aa).

Coiled coils occupy residues 4–206, 432–466, and 555–597; these read GDLQ…LKTL, RLHD…TTND, and ESRE…KETL.

As to quaternary structure, component of the FERRY complex.

The protein resides in the early endosome. Its function is as follows. Component of the FERRY complex (Five-subunit Endosomal Rab5 and RNA/ribosome intermediary). The FERRY complex directly interacts with mRNAs and RAB5A, and functions as a RAB5A effector involved in the localization and the distribution of specific mRNAs most likely by mediating their endosomal transport. The complex recruits mRNAs and ribosomes to early endosomes through direct mRNA-interaction. Putative regulator of protein phosphatase 1 (PP1) activity. May play a role in the endosomal sorting process or in endosome maturation pathway. The protein is Protein phosphatase 1 regulatory subunit 21 (ppp1r21) of Xenopus laevis (African clawed frog).